Consider the following 149-residue polypeptide: Large ribosomal subunit protein uL13 (149 aa).

The protein belongs to the universal ribosomal protein uL13 family. In terms of assembly, part of the 50S ribosomal subunit.

In terms of biological role, this protein is one of the early assembly proteins of the 50S ribosomal subunit, although it is not seen to bind rRNA by itself. It is important during the early stages of 50S assembly. This chain is Large ribosomal subunit protein uL13, found in Chlorobium phaeovibrioides (strain DSM 265 / 1930) (Prosthecochloris vibrioformis (strain DSM 265)).